We begin with the raw amino-acid sequence, 923 residues long: Lysosomal acid alpha-glucosidase (923 aa).

The first 17 residues, 1–17, serve as a signal peptide directing secretion; the sequence is MKHQVLLPLLVTTAIIA. A propeptide spanning residues 18–36 is cleaved from the precursor; the sequence is GSVGVYTHSKPLLGQSQDQ. N-linked (GlcNAc...) asparagine glycans are attached at residues asparagine 65, asparagine 405, and asparagine 440. Catalysis depends on aspartate 455, which acts as the Nucleophile. Glutamate 458 is an active-site residue. The Proton donor role is filled by aspartate 585. N-linked (GlcNAc...) asparagine glycans are attached at residues asparagine 586, asparagine 621, asparagine 646, asparagine 848, asparagine 908, and asparagine 912.

This sequence belongs to the glycosyl hydrolase 31 family.

The protein resides in the lysosome. It is found in the secreted. It catalyses the reaction Hydrolysis of terminal, non-reducing (1-&gt;4)-linked alpha-D-glucose residues with release of alpha-D-glucose.. Essential for the degradation of glycogen to glucose in lysosomes. Has both alpha-1,4 and alpha-1,6-glucosidase activity. The chain is Lysosomal acid alpha-glucosidase from Tetrahymena pyriformis.